We begin with the raw amino-acid sequence, 170 residues long: MNINRSRLINNFIFISILVFFDQWSKYLVVKYIRIGTEYLSFFGDFFKIIHVRNTGVLFSIGSNIDPSLKNLFFLIIPIIILIFVFSFALKETNRIARIALVLILSGGIGNIIDRFFRPLGVVDFLDVKFFGIFGLQRWPTFNFADSYVVIGITLFIIYDLFAKNQSTNL.

3 consecutive transmembrane segments (helical) span residues 13 to 33, 72 to 92, and 96 to 113; these read IFIS…VKYI, LFFL…ALKE, and IARI…GNII. Active-site residues include Asp-124 and Asp-146. A helical transmembrane segment spans residues 142–162; sequence FNFADSYVVIGITLFIIYDLF.

The protein belongs to the peptidase A8 family.

It is found in the cell inner membrane. It carries out the reaction Release of signal peptides from bacterial membrane prolipoproteins. Hydrolyzes -Xaa-Yaa-Zaa-|-(S,diacylglyceryl)Cys-, in which Xaa is hydrophobic (preferably Leu), and Yaa (Ala or Ser) and Zaa (Gly or Ala) have small, neutral side chains.. The protein operates within protein modification; lipoprotein biosynthesis (signal peptide cleavage). Its function is as follows. This protein specifically catalyzes the removal of signal peptides from prolipoproteins. The sequence is that of Lipoprotein signal peptidase from Borrelia turicatae (strain 91E135).